We begin with the raw amino-acid sequence, 207 residues long: Large ribosomal subunit protein uL4 (207 aa).

Residues M44–I78 are disordered.

The protein belongs to the universal ribosomal protein uL4 family. Part of the 50S ribosomal subunit.

Functionally, one of the primary rRNA binding proteins, this protein initially binds near the 5'-end of the 23S rRNA. It is important during the early stages of 50S assembly. It makes multiple contacts with different domains of the 23S rRNA in the assembled 50S subunit and ribosome. In terms of biological role, forms part of the polypeptide exit tunnel. The sequence is that of Large ribosomal subunit protein uL4 from Geobacillus kaustophilus (strain HTA426).